Reading from the N-terminus, the 226-residue chain is Protein DVU_0532 (226 aa).

The next 6 helical transmembrane spans lie at 1–23 (MYAF…GLLA), 46–57 (AIGLQGAVQSAL), 73–99 (FFTV…NVIL), 112–131 (MGVA…MIAL), 141–164 (ILTT…GFLA), and 194–222 (LSHI…TRGP).

Heme b is required as a cofactor.

The protein resides in the cell membrane. In terms of biological role, HMWC (high-molecular-weight cytochrome c), ORF2, ORF3, ORF4, ORF5 and ORF6 in the HMC operon form a transmembrane protein complex that allows electron flow from the periplasmic hydrogenase to the cytoplasmic enzymes that catalyze reduction of sulfates. In Nitratidesulfovibrio vulgaris (strain ATCC 29579 / DSM 644 / CCUG 34227 / NCIMB 8303 / VKM B-1760 / Hildenborough) (Desulfovibrio vulgaris), this protein is Protein DVU_0532.